Reading from the N-terminus, the 601-residue chain is Ribosomal oxygenase 1 (601 aa).

Over residues 1 to 11 (MAACGAEERQR) the composition is skewed to basic and acidic residues. Residues 1–149 (MAACGAEERQ…PGGGGVPGLL (149 aa)) are disordered. The span at 61 to 70 (ERAAPPQGAA) shows a compositional bias: low complexity. The span at 73–87 (DRVERAGSSEAKQGD) shows a compositional bias: basic and acidic residues. A JmjC domain is found at 254-399 (CSLRLLSPQA…DFLEKLLPAA (146 aa)). Fe cation-binding residues include His-300, Asp-302, and His-365.

Belongs to the ROX family. NO66 subfamily. Fe(2+) serves as cofactor.

It localises to the nucleus. Its subcellular location is the nucleolus. It is found in the nucleoplasm. It carries out the reaction N(6),N(6)-dimethyl-L-lysyl(36)-[histone H3] + 2 2-oxoglutarate + 2 O2 = L-lysyl(36)-[histone H3] + 2 formaldehyde + 2 succinate + 2 CO2. The catalysed reaction is N(6)-methyl-L-lysyl-[protein] + 2-oxoglutarate + O2 = L-lysyl-[protein] + formaldehyde + succinate + CO2. It catalyses the reaction L-histidyl-[protein] + 2-oxoglutarate + O2 = (3S)-3-hydroxy-L-histidyl-[protein] + succinate + CO2. Its function is as follows. Oxygenase that can act as both a histone lysine demethylase and a ribosomal histidine hydroxylase. Specifically demethylates 'Lys-4' (H3K4me) and 'Lys-36' (H3K36me) of histone H3, thereby playing a central role in histone code. Preferentially demethylates trimethylated H3 'Lys-4' (H3K4me3) and monomethylated H3 'Lys-4' (H3K4me1) residues, while it has weaker activity for dimethylated H3 'Lys-36' (H3K36me2). Also catalyzes demethylation of non-histone proteins. Also catalyzes the hydroxylation of 60S ribosomal protein L8 on 'His-216', thereby playing a role in ribosome biogenesis. The polypeptide is Ribosomal oxygenase 1 (RIOX1) (Gallus gallus (Chicken)).